The chain runs to 172 residues: Translocon-associated protein subunit delta (172 aa).

The signal sequence occupies residues 1–23; sequence MAAMASFGALALLLLSGLSCCSE. The Lumenal segment spans residues 24–143; sequence ACLEPQITPS…SVDHRGTWNG (120 aa). A disulfide bridge connects residues Cys25 and Cys56. A Glycyl lysine isopeptide (Lys-Gly) (interchain with G-Cter in ubiquitin) cross-link involves residue Lys72. Residues 144–164 form a helical membrane-spanning segment; the sequence is PWVSTEVLAAVIGIVIYYLAF. Over 165–172 the chain is Cytoplasmic; the sequence is SAKSHIQA.

It belongs to the TRAP-delta family. In terms of assembly, heterotetramer of TRAP-alpha, TRAP-beta, TRAP-delta and TRAP-gamma.

It is found in the endoplasmic reticulum membrane. Functionally, TRAP proteins are part of a complex whose function is to bind calcium to the ER membrane and thereby regulate the retention of ER resident proteins. This Mus musculus (Mouse) protein is Translocon-associated protein subunit delta (Ssr4).